We begin with the raw amino-acid sequence, 67 residues long: Alpha-conotoxin-like Qc1.1b (67 aa).

The N-terminal stretch at 1 to 21 is a signal peptide; sequence MGMRMMFTMFLLVVLAITVVS. Residues 22–46 constitute a propeptide that is removed on maturation; the sequence is FTSDHASDGRNTAANDKASKLMALR. Disulfide bonds link Cys-49/Cys-55 and Cys-50/Cys-63. Positions 51-53 are lacks the Ser-Xaa-Pro motif that is crucial for potent interaction with nAChR; that stretch reads DNP.

It belongs to the conotoxin A superfamily. In terms of tissue distribution, expressed by the venom duct.

The protein localises to the secreted. Functionally, alpha-conotoxins act on postsynaptic membranes, they bind to the nicotinic acetylcholine receptors (nAChR) and thus inhibit them. Has possibly a distinct nAChR binding mode from other alpha-conotoxins, due to a different three residue motif (lacks the Ser-Xaa-Pro motif). The polypeptide is Alpha-conotoxin-like Qc1.1b (Conus quercinus (Oak cone)).